The primary structure comprises 508 residues: Histidine ammonia-lyase (508 aa).

Residues 139–141 (ASG) constitute a cross-link (5-imidazolinone (Ala-Gly)). A 2,3-didehydroalanine (Ser) modification is found at Ser140.

This sequence belongs to the PAL/histidase family. Contains an active site 4-methylidene-imidazol-5-one (MIO), which is formed autocatalytically by cyclization and dehydration of residues Ala-Ser-Gly.

Its subcellular location is the cytoplasm. The enzyme catalyses L-histidine = trans-urocanate + NH4(+). Its pathway is amino-acid degradation; L-histidine degradation into L-glutamate; N-formimidoyl-L-glutamate from L-histidine: step 1/3. The chain is Histidine ammonia-lyase from Acidiphilium cryptum (strain JF-5).